We begin with the raw amino-acid sequence, 347 residues long: E3 ubiquitin-protein ligase ARK2C (347 aa).

Disordered regions lie at residues 23–79 (PFQR…GTLH) and 268–289 (PHKYKKRRPQDSKGKKDEGEES). The tract at residues 267–269 (FPH) is ubiquitin binding. Residues 276–285 (PQDSKGKKDE) show a composition bias toward basic and acidic residues. Positions 295 and 298 each coordinate Zn(2+). An RING-type; atypical zinc finger spans residues 295–336 (CTICLSMLEDGEDVRRLPCMHLFHQLCVDQWLAMSKKCPICR). The segment at 310 to 314 (RLPCM) is ubiquitin binding. Positions 318 and 321 each coordinate Zn(2+).

It belongs to the Arkadia family. Monomer; binding to the ubiquitin-conjugating enzyme E2 does not trigger homodimerization. Expressed in neurons of the nervous system.

It localises to the nucleus. It carries out the reaction S-ubiquitinyl-[E2 ubiquitin-conjugating enzyme]-L-cysteine + [acceptor protein]-L-lysine = [E2 ubiquitin-conjugating enzyme]-L-cysteine + N(6)-ubiquitinyl-[acceptor protein]-L-lysine.. Binds free ubiquitin non-covalently via its RING-type zinc finger. Ubiquitin-binding leads to enhance the E3 ubiquitin-protein ligase activity by stabilizing the ubiquitin-conjugating enzyme E2 (donor ubiquitin) in the 'closed' conformation and activating ubiquitin transfer. E3 ubiquitin-protein ligase that acts as a regulator of motor axon elongation. Required for efficient motor axon extension in the dorsal forelimb by enhancing the transcriptional responses of the SMAD1/SMAD5/SMAD8 effectors, which are activated downstream of BMP. Acts by mediating ubiquitination and degradation of SMAD inhibitors such as SMAD6, SMAD7, SKI and SNON isoform of SKIL. The sequence is that of E3 ubiquitin-protein ligase ARK2C from Mus musculus (Mouse).